Here is an 873-residue protein sequence, read N- to C-terminus: Protein sey1 (873 aa).

Residues 1–762 lie on the Cytoplasmic side of the membrane; the sequence is MVDQRPRAGS…KRSAIGGITQ (762 aa). The region spanning 68 to 320 is the GB1/RHD3-type G domain; that stretch reads GFNYHLISVF…IPADGFAHYA (253 aa). A GTP-binding site is contributed by 78–85; sequence GSQSTGKS. Residues 462-519 are a coiled coil; sequence SYDFAEIVKQETKAALERYEKEARASLVEGTSWSNYKQELKLYQKDLAEVSGQLRRDE. Positions 691–716 are disordered; the sequence is RWVGHTPSSATAADEEDLTPIGGVDE. Residues 703–716 show a composition bias toward acidic residues; sequence ADEEDLTPIGGVDE. A helical membrane pass occupies residues 763–783; that stretch reads VPLYFYGLLLALGWNEIWAVL. The Lumenal portion of the chain corresponds to 784 to 786; the sequence is RNP. Residues 787–807 form a helical membrane-spanning segment; the sequence is AYFFLLFVCAIGAYVTYQLNL. Residues 808–873 are Cytoplasmic-facing; sequence WGPILKMADA…VEDEDENDDI (66 aa). Residues 812–839 are a coiled coil; that stretch reads LKMADAASRQALEELKKKLREFLEASDT. The segment at 839–873 is disordered; it reads TGRQAMAMSSGEEYEMSSLNRGGKRVEDEDENDDI.

It belongs to the TRAFAC class dynamin-like GTPase superfamily. GB1/RHD3 GTPase family. RHD3 subfamily.

Its subcellular location is the endoplasmic reticulum membrane. Functionally, cooperates with the reticulon proteins and tubule-shaping DP1 family proteins to generate and maintain the structure of the tubular endoplasmic reticulum network. Has GTPase activity, which is required for its function in ER organization. The polypeptide is Protein sey1 (sey1) (Talaromyces marneffei (strain ATCC 18224 / CBS 334.59 / QM 7333) (Penicillium marneffei)).